We begin with the raw amino-acid sequence, 79 residues long: Small ribosomal subunit protein bS18c (79 aa).

The protein belongs to the bacterial ribosomal protein bS18 family. As to quaternary structure, part of the 30S ribosomal subunit.

It is found in the plastid. The protein localises to the chloroplast. The protein is Small ribosomal subunit protein bS18c of Chaetosphaeridium globosum (Charophycean green alga).